Consider the following 377-residue polypeptide: UDP-N,N'-diacetylbacillosamine 2-epimerase (hydrolyzing) (377 aa).

It belongs to the UDP-N-acetylglucosamine 2-epimerase family.

It catalyses the reaction UDP-N,N'-diacetylbacillosamine + H2O = 2,4-diacetamido-2,4,6-trideoxy-alpha-D-mannopyranose + UDP + H(+). In terms of biological role, involved in biosynthesis of legionaminic acid (5,7-diamino-3,5,7,9-tetradeoxy-D-glycero-D-galacto-non-2-ulosonic acid)(Leg), a sialic acid-like derivative that is incorporated into virulence-associated cell surface glycoconjugates such as lipopolysaccharide (LPS) which could be a key determinant in the ability of L.pneumophila to inhibit the fusion of phagosomes with lysosomes. LPS contains a majority alpha2,4-linked homomer of legionaminic acid. Catalyzes the conversion of UDP-N,N'-diacetylbacillosamine (Bac2Ac4Ac) into 2,4-diacetamido-2,4,6-trideoxymannose and UDP. The sequence is that of UDP-N,N'-diacetylbacillosamine 2-epimerase (hydrolyzing) from Legionella pneumophila subsp. pneumophila (strain Philadelphia 1 / ATCC 33152 / DSM 7513).